The chain runs to 118 residues: Immunoglobulin heavy variable 4-31 (118 aa).

The N-terminal stretch at 1–19 (MKHLWFFLLLVAAPRWVLS) is a signal peptide. A framework-1 region spans residues 20–44 (QVQLQESGPGLVKPSQTLSLTCTVS). The region spanning 20–118 (QVQLQESGPG…ADTAVYYCAR (99 aa)) is the Ig-like domain. A disulfide bond links cysteine 41 and cysteine 116. The tract at residues 45 to 54 (GGSISSGGYY) is complementarity-determining-1. The segment at 55–71 (WSWIRQHPGKGLEWIGY) is framework-2. The segment at 72–78 (IYYSGST) is complementarity-determining-2. Residues 79–116 (YYNPSLKSLVTISVDTSKNQFSLKLSSVTAADTAVYYC) are framework-3. The segment at 117-118 (AR) is complementarity-determining-3.

Immunoglobulins are composed of two identical heavy chains and two identical light chains; disulfide-linked.

The protein localises to the secreted. The protein resides in the cell membrane. Functionally, v region of the variable domain of immunoglobulin heavy chains that participates in the antigen recognition. Immunoglobulins, also known as antibodies, are membrane-bound or secreted glycoproteins produced by B lymphocytes. In the recognition phase of humoral immunity, the membrane-bound immunoglobulins serve as receptors which, upon binding of a specific antigen, trigger the clonal expansion and differentiation of B lymphocytes into immunoglobulins-secreting plasma cells. Secreted immunoglobulins mediate the effector phase of humoral immunity, which results in the elimination of bound antigens. The antigen binding site is formed by the variable domain of one heavy chain, together with that of its associated light chain. Thus, each immunoglobulin has two antigen binding sites with remarkable affinity for a particular antigen. The variable domains are assembled by a process called V-(D)-J rearrangement and can then be subjected to somatic hypermutations which, after exposure to antigen and selection, allow affinity maturation for a particular antigen. In Homo sapiens (Human), this protein is Immunoglobulin heavy variable 4-31.